A 343-amino-acid chain; its full sequence is uncharacterized protein (343 aa).

Disordered stretches follow at residues 1 to 27 and 205 to 247; these read MIREWENGCPKIGKQRARDSRAQERMT and SGGL…SKRQ. The segment covering 16–27 has biased composition (basic and acidic residues); sequence RARDSRAQERMT. A compositionally biased stretch (acidic residues) spans 219–228; that stretch reads GQDDGNTDDG. A compositionally biased stretch (basic and acidic residues) spans 229-247; it reads NDVHQKGRGEVESKTSKRQ.

Dispensable for normal development and fertility. This is an uncharacterized protein from Bos taurus (Bovine).